A 570-amino-acid chain; its full sequence is Periplasmic trehalase (570 aa).

Positions 1 to 34 are cleaved as a signal peptide; the sequence is MIPPEIRRSVLLQKAIKLALAGTLLTFASFSATA. Residues R159, 166–167, N203, 212–214, 284–286, and G317 each bind substrate; these read WD, RSQ, and RPE. Catalysis depends on proton donor/acceptor residues D319 and E503. E518 provides a ligand contact to substrate. The segment at 544 to 570 is disordered; the sequence is KPCDSVPSTRPASLSATPTKTPSAATQ. The segment covering 554 to 570 has biased composition (low complexity); that stretch reads PASLSATPTKTPSAATQ.

This sequence belongs to the glycosyl hydrolase 37 family. In terms of assembly, monomer.

It localises to the periplasm. The enzyme catalyses alpha,alpha-trehalose + H2O = alpha-D-glucose + beta-D-glucose. Provides the cells with the ability to utilize trehalose at high osmolarity by splitting it into glucose molecules that can subsequently be taken up by the phosphotransferase-mediated uptake system. The polypeptide is Periplasmic trehalase (Salmonella paratyphi B (strain ATCC BAA-1250 / SPB7)).